The following is a 148-amino-acid chain: Pseudoazurin (148 aa).

A signal peptide spans 1 to 25 (MMIFRALIAAATLAIAIATTLPAAA). Positions 30–118 (VKMLNSGPGG…MGMVALVVVG (89 aa)) constitute a Plastocyanin-like domain. 4 residues coordinate Cu cation: H65, C103, H106, and M111.

It depends on Cu cation as a cofactor.

The protein resides in the periplasm. The sequence is that of Pseudoazurin from Methylorubrum extorquens (strain ATCC 14718 / DSM 1338 / JCM 2805 / NCIMB 9133 / AM1) (Methylobacterium extorquens).